The primary structure comprises 375 residues: Growth/differentiation factor 8 (375 aa).

Residues 1–23 (MQKLAVYVYIYLFMQILVHPVAL) form the signal peptide. Residues 24–266 (DGSSQPTENA…VTDTPKRSRR (243 aa)) constitute a propeptide that is removed on maturation. Asparagine 71 carries N-linked (GlcNAc...) asparagine glycosylation. 4 disulfide bridges follow: cysteine 272-cysteine 282, cysteine 281-cysteine 340, cysteine 309-cysteine 372, and cysteine 313-cysteine 374.

This sequence belongs to the TGF-beta family. In terms of assembly, homodimer; disulfide-linked.

The protein resides in the secreted. In terms of biological role, acts specifically as a negative regulator of skeletal muscle growth. In Meleagris gallopavo (Wild turkey), this protein is Growth/differentiation factor 8 (MSTN).